A 313-amino-acid polypeptide reads, in one-letter code: uncharacterized protein (313 aa).

This is an uncharacterized protein from Bacillus subtilis (strain 168).